Here is a 142-residue protein sequence, read N- to C-terminus: Large ribosomal subunit protein uL13 (142 aa).

The protein belongs to the universal ribosomal protein uL13 family. As to quaternary structure, part of the 50S ribosomal subunit.

Functionally, this protein is one of the early assembly proteins of the 50S ribosomal subunit, although it is not seen to bind rRNA by itself. It is important during the early stages of 50S assembly. The sequence is that of Large ribosomal subunit protein uL13 from Burkholderia cenocepacia (strain ATCC BAA-245 / DSM 16553 / LMG 16656 / NCTC 13227 / J2315 / CF5610) (Burkholderia cepacia (strain J2315)).